A 200-amino-acid chain; its full sequence is Superoxide dismutase [Mn] (200 aa).

Mn(2+) is bound by residues histidine 27, histidine 77, aspartate 160, and histidine 164.

It belongs to the iron/manganese superoxide dismutase family. As to quaternary structure, homodimer. Mn(2+) serves as cofactor.

It catalyses the reaction 2 superoxide + 2 H(+) = H2O2 + O2. In terms of biological role, destroys superoxide anion radicals which are normally produced within the cells and which are toxic to biological systems. The polypeptide is Superoxide dismutase [Mn] (sodB) (Rhizobium meliloti (strain 1021) (Ensifer meliloti)).